The primary structure comprises 147 residues: MLTNQELTAKVKEISLTYFKQSFDHEAKWNQRLRTTGGRFFPKDLHLDFNPKMAELKDFEGVILHELTHYHLYRSKRGYKHRDADFKRLLSQVGGLRYAPSVIDKKIKYYYSCQNCGQLYPRQRKIDTKKYRCGKCRGKLILKTSGN.

The SprT-like domain occupies 9-142 (AKVKEISLTY…CGKCRGKLIL (134 aa)). Residue His65 coordinates Zn(2+). Residue Glu66 is part of the active site. His69 provides a ligand contact to Zn(2+).

Belongs to the SprT family. The cofactor is Zn(2+).

It is found in the cytoplasm. This chain is Protein SprT-like (yciD), found in Lactococcus lactis subsp. lactis (strain IL1403) (Streptococcus lactis).